The chain runs to 801 residues: Protein SDA1 homolog (801 aa).

4 disordered regions span residues 1-40 (MGKVSKSPGKGEKRIGKVGKKNGKSNAPTEGSNSGKASRF), 495-517 (RKDRGKPQEKDDEDEEYNGFARP), 536-647 (GEQG…SKNS), and 739-801 (DYKF…RKPQ). Residues 24-40 (KSNAPTEGSNSGKASRF) show a composition bias toward polar residues. Composition is skewed to acidic residues over residues 544 to 568 (DGTDSELDVSDVDTDDVDTDDDADE) and 583 to 633 (NDAE…EASE). 2 stretches are compositionally biased toward basic residues: residues 770–779 (NKIRGRNRQR) and 787–801 (SLRHYLMRQSGRKPQ).

The protein belongs to the SDA1 family.

It is found in the nucleus. Required for 60S pre-ribosomal subunits export to the cytoplasm. Required for normal somatic gonad development and for regulation of germline development and proliferation. The sequence is that of Protein SDA1 homolog (pro-3) from Caenorhabditis elegans.